Reading from the N-terminus, the 340-residue chain is Guanine nucleotide-binding protein G(I)/G(S)/G(T) subunit beta-2 (340 aa).

Residue S2 is modified to N-acetylserine. WD repeat units follow at residues 53–83 (GHLAKIYAMHWGTDSRLLVSASQDGKLIIWD), 95–125 (LRSSWVMTCAYAPSGNFVACGGLDNICSIYS), 141–170 (GHTGYLSCCRFLDDNQIITSSGDTTCALWD), 182–212 (GHSGDVMSLSLAPDGRTFVSGACDASIKLWD), 224–254 (GHESDINAVAFFPNGYAFTTGSDDATCRLFD), 268–298 (NIICGITSVAFSRSGRLLLAGYDDFNCNIWD), and 310–340 (GHDNRVSCLGVTDDGMAVATGSWDSFLKIWN). Y239 carries the post-translational modification Phosphotyrosine.

The protein belongs to the WD repeat G protein beta family. In terms of assembly, g proteins are composed of 3 units, alpha, beta and gamma. In this context, interacts with GNAI2 and GNG2. Interacts with ARHGEF18 and RASD2. Interacts with ATXN10. Interacts with SCN8A. Expressed in all cardiac subcompartments and in the brain, with highest levels in the atrioventricular node and brain.

It is found in the cytoplasm. The protein resides in the perinuclear region. Its subcellular location is the cell membrane. Its function is as follows. Guanine nucleotide-binding proteins (G proteins) are involved as a modulator or transducer in various transmembrane signaling systems. The beta and gamma chains are required for the GTPase activity, for replacement of GDP by GTP, and for G protein-effector interaction. The protein is Guanine nucleotide-binding protein G(I)/G(S)/G(T) subunit beta-2 (GNB2) of Homo sapiens (Human).